We begin with the raw amino-acid sequence, 172 residues long: Large ribosomal subunit protein uL10 (172 aa).

The protein belongs to the universal ribosomal protein uL10 family. As to quaternary structure, part of the ribosomal stalk of the 50S ribosomal subunit. The N-terminus interacts with L11 and the large rRNA to form the base of the stalk. The C-terminus forms an elongated spine to which L12 dimers bind in a sequential fashion forming a multimeric L10(L12)X complex.

Functionally, forms part of the ribosomal stalk, playing a central role in the interaction of the ribosome with GTP-bound translation factors. In Rhizobium leguminosarum bv. trifolii (strain WSM2304), this protein is Large ribosomal subunit protein uL10.